A 599-amino-acid polypeptide reads, in one-letter code: Nucleosomal histone kinase 1 (599 aa).

Residues 47–328 form the Protein kinase domain; it reads WRIGPSIGVG…PDYDKCRSWF (282 aa). ATP contacts are provided by residues 53-61 and K77; that span reads IGVGGFGEI. The Proton acceptor role is filled by D183. Disordered regions lie at residues 340–507 and 532–599; these read NGDL…PQPR and RKKK…KYQG. Polar residues predominate over residues 349–361; that stretch reads PQTSSNNNLSPPG. Phosphoserine occurs at positions 376, 381, 382, 388, and 390. The span at 435 to 448 shows a compositional bias: basic and acidic residues; it reads VKTEPKSTPRERAT. Phosphoserine is present on S483. The span at 546 to 558 shows a compositional bias: low complexity; sequence SRTPSSRSALASS. Phosphoserine is present on residues S564 and S586. At T589 the chain carries Phosphothreonine.

This sequence belongs to the protein kinase superfamily. CK1 Ser/Thr protein kinase family. VRK subfamily. In terms of assembly, may interact with Unc-89 (via protein kinase domain 1). Interacts with L(2)gl. Mg(2+) is required as a cofactor. Phosphorylated during mitosis and female meiosis. In terms of tissue distribution, expressed in ovaries (at protein level). Expressed in indirect flight muscle (IFM) (at protein level).

It is found in the cytoplasm. The protein resides in the nucleus. Its subcellular location is the chromosome. It localises to the myofibril. The protein localises to the sarcomere. It is found in the z line. The protein resides in the m line. The enzyme catalyses L-seryl-[protein] + ATP = O-phospho-L-seryl-[protein] + ADP + H(+). It catalyses the reaction L-threonyl-[protein] + ATP = O-phospho-L-threonyl-[protein] + ADP + H(+). Functionally, serine/threonine-protein kinase involved in somatic mitosis and female meiosis. Required for spindle organization in mitosis, and for the establishment or maintenance of meiosis-specific chromosomal configurations, including the prophase I karyosome and the metaphase I spindle. Specifically phosphorylates nucleosomal H2A on 'Thr-119'. Required for the development and organization of indirect flight muscle sarcomeres by regulating the formation of M line and H zone and the correct assembly of thick and thin filaments in the sarcomere. The protein is Nucleosomal histone kinase 1 (ball) of Drosophila melanogaster (Fruit fly).